Here is a 208-residue protein sequence, read N- to C-terminus: Small ribosomal subunit protein uS4 (208 aa).

The 67-residue stretch at 98–164 (TRLDNVVYRL…PKVKSIREIA (67 aa)) folds into the S4 RNA-binding domain.

This sequence belongs to the universal ribosomal protein uS4 family. Part of the 30S ribosomal subunit. Contacts protein S5. The interaction surface between S4 and S5 is involved in control of translational fidelity.

Its function is as follows. One of the primary rRNA binding proteins, it binds directly to 16S rRNA where it nucleates assembly of the body of the 30S subunit. With S5 and S12 plays an important role in translational accuracy. This chain is Small ribosomal subunit protein uS4, found in Ruminiclostridium cellulolyticum (strain ATCC 35319 / DSM 5812 / JCM 6584 / H10) (Clostridium cellulolyticum).